The sequence spans 324 residues: Appendage-associated protein (324 aa).

The signal sequence occupies residues 1–32 (MGCPVSRGGSPGCGRRIAEELRLAEDARLRLA). A coiled-coil region spans residues 195-255 (IAQAKEIAQA…AADKLQALGK (61 aa)).

It is found in the secreted. Its function is as follows. Associates with actin filament appendages that are formed in the inclusion appendages of the parasitophorous vacuole during infection of the host erythrocyte. This Anaplasma marginale (strain Florida) protein is Appendage-associated protein (aaaP1).